Here is a 101-residue protein sequence, read N- to C-terminus: MAKVSSIKKNEKRKKLSQSLHNKREKLKNKIYDKNISLEERFSLVMSLAQLSRNSSATRIRNRCELTGRPRGVIRKFGISRNKLRELSGRGLVPGIIKSSW.

The disordered stretch occupies residues 1 to 24 (MAKVSSIKKNEKRKKLSQSLHNKR). Residues 10–24 (NEKRKKLSQSLHNKR) are compositionally biased toward basic residues.

This sequence belongs to the universal ribosomal protein uS14 family. Part of the 30S ribosomal subunit. Contacts proteins S3 and S10.

In terms of biological role, binds 16S rRNA, required for the assembly of 30S particles and may also be responsible for determining the conformation of the 16S rRNA at the A site. The polypeptide is Small ribosomal subunit protein uS14 (Rickettsia bellii (strain OSU 85-389)).